The chain runs to 468 residues: UDP-N-acetylmuramate--L-alanine ligase (468 aa).

114-120 (GTHGKTT) provides a ligand contact to ATP.

Belongs to the MurCDEF family.

It localises to the cytoplasm. The enzyme catalyses UDP-N-acetyl-alpha-D-muramate + L-alanine + ATP = UDP-N-acetyl-alpha-D-muramoyl-L-alanine + ADP + phosphate + H(+). It functions in the pathway cell wall biogenesis; peptidoglycan biosynthesis. In terms of biological role, cell wall formation. This chain is UDP-N-acetylmuramate--L-alanine ligase, found in Methylorubrum populi (strain ATCC BAA-705 / NCIMB 13946 / BJ001) (Methylobacterium populi).